The chain runs to 196 residues: Calcium channel flower (196 aa).

Helical transmembrane passes span 36 to 56 (LGIVAAFFAILFGLWNVLSII), 67 to 89 (IIQMLAGFVVMALEAPCCFICIE), and 114 to 134 (AVPPIFMCFGLASLFGSGLIF).

It belongs to the calcium channel flower family. In terms of assembly, homomultimer. Associates with the dally/ magu complex.

The protein resides in the cell membrane. The protein localises to the cytoplasmic vesicle. It is found in the secretory vesicle. Its subcellular location is the synaptic vesicle membrane. It localises to the presynaptic cell membrane. The protein resides in the endosome. Channel activity is inhibited by La(3+), which reduces Ca(2+) influx and thus inhibits it's function in promoting activity-dependent bulk endocytosis (ADBE) in response to high stimuli. In terms of biological role, transmembrane protein which mediates synaptic endocytosis, fitness-based cell culling, neuronal culling, morphogen gradient scaling, and calcium transport. Regulates synaptic endocytosis and hence couples exo- with endocytosis. Controls two major modes of synaptic vesicle (SV) endocytosis in the synaptic boutons of neuromuscular junctions (NMJs); Ca(2+) channel-independent Clathrin-mediated endocytosis (CME) in response to mild stimulation, and Ca(2+) channel-dependent activity-dependent bulk endocytosis (ADBE) in response to strong stimulation. Functions in ADBE and subsequent SV reformation from bulk endosomes by initiating Ca(2+) channel-dependent phosphatidylinositol 4,5-bisphosphate (PtdIns(4,5)P2) compartmentalization in synaptic boutons. There it acts at the periactive zone to provide the low Ca(2+) levels required to initiate Calcineurin activation and upregulate PtdIns(4,5)P2. Conversely PtdIns(4,5)P2 enhances fwe Ca(2+) channel-activity, establishing a positive feedback loop that induces PtdIns(4,5)P2 microdomain at the periactive zone. These microdomains trigger bulk membrane invagination (i.e. ADBE) by triggering actin polymerization while also promoting localization of fwe to bulk endosomes, thereby removing the ADBE trigger to reduce endocytosis and prevent excess membrane uptake. PtdIns(4,5)P2 then promotes SV reformation from the bulk endosomes, to coordinate ADBE and subsequent SV reformation. Different combinations of the flower isoforms at the cell membrane are also required for the identification and elimination of suboptimal or supernumerary cells during development, regeneration, and adulthood. Required for the recognition and elimination of unfit cells in the developing wing during cell competition. In the developing pupal retina, mediates the elimination of unwanted postmitotic neurons, including supernumerary photoreceptor neurons that form at the periphery of the retina and are contained within incomplete ommatidia units. Also required for efficient elimination and replacement of old neurons by newly generated neurons during regeneration in the adult brain following mechanical injury. Downstream of the flower fitness fingerprints, cells identified as unwanted or unfit are eliminated via apoptosis through the expression of ahuizotl (azot). However, the cells marked for elimination by the flower isoforms only undergo apoptosis if additional thresholds are met; (1) their neighboring fit/healthy cells express different levels of the fwe isoforms, and (2) the levels of the protective signal SPARC expressed by the loser or unwanted cells are unable to inhibit caspase activation. These additional thresholds for flower-mediated apoptosis, allows useful cells to recover from transient and limited stress before they are unnecessarily eliminated. Functions with dally and magu in a mechanism of scaling, which utilises apoptosis to ensure that the dpp morphogen gradient, which mediates organ growth, remains proportional to the size of the growing wing. In this mechanism, fwe represses dally- and Magu-dependent activity in expanding the gradient, and dally/Magu inhibits fwe-dependent apoptosis to keep cell death rate low. When the levels of these different proteins are optimally regulated the gradient correctly scales with organ growth but when this fails, fwe-mediated apoptosis is activated to trim the developing tissue to match the correct size of the gradient. The sequence is that of Calcium channel flower from Drosophila virilis (Fruit fly).